The chain runs to 196 residues: Holliday junction branch migration complex subunit RuvA (196 aa).

Residues 1-63 form a domain I region; that stretch reads MINKIHGKVI…ENELKLFGFL (63 aa). A domain II region spans residues 64–139; the sequence is NSDERETFKS…KLLINNELES (76 aa). A region of interest (flexible linker) is located at residue Ser139. Positions 139–196 are domain III; the sequence is SSLFGFKELEESIVSMGFDRKIVNSKLKEACDLIEFSNLKDSEKEQFLFKEVLKRMSN.

It belongs to the RuvA family. Homotetramer. Forms an RuvA(8)-RuvB(12)-Holliday junction (HJ) complex. HJ DNA is sandwiched between 2 RuvA tetramers; dsDNA enters through RuvA and exits via RuvB. An RuvB hexamer assembles on each DNA strand where it exits the tetramer. Each RuvB hexamer is contacted by two RuvA subunits (via domain III) on 2 adjacent RuvB subunits; this complex drives branch migration. In the full resolvosome a probable DNA-RuvA(4)-RuvB(12)-RuvC(2) complex forms which resolves the HJ.

It localises to the cytoplasm. In terms of biological role, the RuvA-RuvB-RuvC complex processes Holliday junction (HJ) DNA during genetic recombination and DNA repair, while the RuvA-RuvB complex plays an important role in the rescue of blocked DNA replication forks via replication fork reversal (RFR). RuvA specifically binds to HJ cruciform DNA, conferring on it an open structure. The RuvB hexamer acts as an ATP-dependent pump, pulling dsDNA into and through the RuvAB complex. HJ branch migration allows RuvC to scan DNA until it finds its consensus sequence, where it cleaves and resolves the cruciform DNA. The sequence is that of Holliday junction branch migration complex subunit RuvA from Borrelia garinii subsp. bavariensis (strain ATCC BAA-2496 / DSM 23469 / PBi) (Borreliella bavariensis).